The following is a 173-amino-acid chain: Adenine phosphoribosyltransferase (173 aa).

It belongs to the purine/pyrimidine phosphoribosyltransferase family. Homodimer.

It is found in the cytoplasm. The enzyme catalyses AMP + diphosphate = 5-phospho-alpha-D-ribose 1-diphosphate + adenine. Its pathway is purine metabolism; AMP biosynthesis via salvage pathway; AMP from adenine: step 1/1. In terms of biological role, catalyzes a salvage reaction resulting in the formation of AMP, that is energically less costly than de novo synthesis. In Petrotoga mobilis (strain DSM 10674 / SJ95), this protein is Adenine phosphoribosyltransferase.